The following is a 634-amino-acid chain: Threonine--tRNA ligase (634 aa).

The TGS domain occupies 1-61 (MINITLPDGS…DHDASLRIIT (61 aa)). The interval 243-534 (DHRRIGKAQD…LIEHHAGAFP (292 aa)) is catalytic. Zn(2+)-binding residues include C334, H385, and H511.

It belongs to the class-II aminoacyl-tRNA synthetase family. Homodimer. Requires Zn(2+) as cofactor.

The protein localises to the cytoplasm. The catalysed reaction is tRNA(Thr) + L-threonine + ATP = L-threonyl-tRNA(Thr) + AMP + diphosphate + H(+). Catalyzes the attachment of threonine to tRNA(Thr) in a two-step reaction: L-threonine is first activated by ATP to form Thr-AMP and then transferred to the acceptor end of tRNA(Thr). Also edits incorrectly charged L-seryl-tRNA(Thr). This chain is Threonine--tRNA ligase, found in Xanthomonas oryzae pv. oryzae (strain MAFF 311018).